Here is a 311-residue protein sequence, read N- to C-terminus: Aspartate carbamoyltransferase catalytic subunit (311 aa).

Carbamoyl phosphate-binding residues include Arg-55 and Thr-56. Lys-85 provides a ligand contact to L-aspartate. Arg-106, His-135, and Gln-138 together coordinate carbamoyl phosphate. The L-aspartate site is built by Arg-168 and Arg-230. Leu-268 and Pro-269 together coordinate carbamoyl phosphate.

The protein belongs to the aspartate/ornithine carbamoyltransferase superfamily. ATCase family. Heterododecamer (2C3:3R2) of six catalytic PyrB chains organized as two trimers (C3), and six regulatory PyrI chains organized as three dimers (R2).

It carries out the reaction carbamoyl phosphate + L-aspartate = N-carbamoyl-L-aspartate + phosphate + H(+). Its pathway is pyrimidine metabolism; UMP biosynthesis via de novo pathway; (S)-dihydroorotate from bicarbonate: step 2/3. Its function is as follows. Catalyzes the condensation of carbamoyl phosphate and aspartate to form carbamoyl aspartate and inorganic phosphate, the committed step in the de novo pyrimidine nucleotide biosynthesis pathway. The chain is Aspartate carbamoyltransferase catalytic subunit from Escherichia coli O139:H28 (strain E24377A / ETEC).